Consider the following 691-residue polypeptide: T-box transcription factor TBX2-B (691 aa).

Positions 104-277 (LWDQFHKIGT…HNPFAKGFRD (174 aa)) form a DNA-binding region, T-box. 2 disordered regions span residues 301 to 440 (CKAD…SLSK) and 612 to 691 (NLLT…ESPK). The segment covering 325–335 (HSPLSAAPSPL) has biased composition (low complexity). Composition is skewed to basic and acidic residues over residues 340-361 (TNRE…EVRS), 378-402 (RLED…RKDG), and 415-433 (SLEK…KSDP). Low complexity predominate over residues 624–639 (PGSESSKPGSSRESSP). Positions 659–684 (SMKDSINELQRIQRLVSGLERQREVS) form a coiled coil. Positions 678–691 (ERQREVSPGRESPK) are enriched in basic and acidic residues.

In terms of assembly, binds DNA as a monomer.

It localises to the nucleus. In terms of biological role, transcription factor which acts as a transcriptional repressor. May also function as a transcriptional activator. Binds to the palindromic T site 5'-TTCACACCTAGGTGTGAA-3' DNA sequence, or a half-site, which are present in the regulatory region of several genes. This chain is T-box transcription factor TBX2-B (tbx2-b), found in Xenopus laevis (African clawed frog).